We begin with the raw amino-acid sequence, 1025 residues long: Multidrug resistance protein MdtC (1025 aa).

12 helical membrane passes run 3 to 23, 333 to 353, 360 to 380, 387 to 407, 431 to 451, 463 to 483, 528 to 548, 853 to 873, 875 to 895, 897 to 917, 953 to 973, and 984 to 1004; these read FFAL…AITL, EVEQ…FLFL, IIPA…MYLC, LSLM…IVVL, VGFT…PLLL, FAVT…TLTP, LVGV…ISIP, VILI…LYES, VHPL…LLAL, LFNA…IGIV, PIMM…LSGG, and ITIV…TPVV.

It belongs to the resistance-nodulation-cell division (RND) (TC 2.A.6) family. MdtC subfamily. Part of a tripartite efflux system composed of MdtA, MdtB and MdtC. MdtC forms a heteromultimer with MdtB.

The protein localises to the cell inner membrane. In terms of biological role, the MdtABC tripartite complex confers resistance against novobiocin and deoxycholate. This Escherichia coli (strain UTI89 / UPEC) protein is Multidrug resistance protein MdtC.